The primary structure comprises 208 residues: Large ribosomal subunit protein uL3 (208 aa).

It belongs to the universal ribosomal protein uL3 family. As to quaternary structure, part of the 50S ribosomal subunit. Forms a cluster with proteins L14 and L19.

One of the primary rRNA binding proteins, it binds directly near the 3'-end of the 23S rRNA, where it nucleates assembly of the 50S subunit. The chain is Large ribosomal subunit protein uL3 from Desulfosudis oleivorans (strain DSM 6200 / JCM 39069 / Hxd3) (Desulfococcus oleovorans).